A 338-amino-acid chain; its full sequence is RNA 3'-terminal phosphate cyclase (338 aa).

Residues Gln-103 and 283 to 287 (YLADQ) contribute to the ATP site. The active-site Tele-AMP-histidine intermediate is the His-308.

The protein belongs to the RNA 3'-terminal cyclase family. Type 1 subfamily.

It is found in the cytoplasm. It catalyses the reaction a 3'-end 3'-phospho-ribonucleotide-RNA + ATP = a 3'-end 2',3'-cyclophospho-ribonucleotide-RNA + AMP + diphosphate. Functionally, catalyzes the conversion of 3'-phosphate to a 2',3'-cyclic phosphodiester at the end of RNA. The mechanism of action of the enzyme occurs in 3 steps: (A) adenylation of the enzyme by ATP; (B) transfer of adenylate to an RNA-N3'P to produce RNA-N3'PP5'A; (C) and attack of the adjacent 2'-hydroxyl on the 3'-phosphorus in the diester linkage to produce the cyclic end product. The biological role of this enzyme is unknown but it is likely to function in some aspects of cellular RNA processing. This Escherichia coli O81 (strain ED1a) protein is RNA 3'-terminal phosphate cyclase.